The primary structure comprises 438 residues: Enolase (438 aa).

Substrate contacts are provided by H159 and E168. E211 acts as the Proton donor in catalysis. Positions 246, 297, and 322 each coordinate Mg(2+). Substrate-binding residues include E297 and D322. Catalysis depends on K347, which acts as the Proton acceptor. Substrate contacts are provided by residues 374–377 and K398; that span reads SHRS.

The protein belongs to the enolase family. Homodimer. Mg(2+) is required as a cofactor.

It is found in the cytoplasm. The catalysed reaction is (2R)-2-phosphoglycerate = phosphoenolpyruvate + H2O. It participates in carbohydrate degradation; glycolysis; pyruvate from D-glyceraldehyde 3-phosphate: step 4/5. Involved in osmoadaptation. The polypeptide is Enolase (enoA) (Emericella nidulans (strain FGSC A4 / ATCC 38163 / CBS 112.46 / NRRL 194 / M139) (Aspergillus nidulans)).